Here is a 183-residue protein sequence, read N- to C-terminus: Peptidyl-tRNA hydrolase (183 aa).

Y15 is a binding site for tRNA. The active-site Proton acceptor is H20. Positions 67 and 69 each coordinate tRNA.

Belongs to the PTH family. Monomer.

The protein resides in the cytoplasm. It carries out the reaction an N-acyl-L-alpha-aminoacyl-tRNA + H2O = an N-acyl-L-amino acid + a tRNA + H(+). Hydrolyzes ribosome-free peptidyl-tRNAs (with 1 or more amino acids incorporated), which drop off the ribosome during protein synthesis, or as a result of ribosome stalling. Functionally, catalyzes the release of premature peptidyl moieties from peptidyl-tRNA molecules trapped in stalled 50S ribosomal subunits, and thus maintains levels of free tRNAs and 50S ribosomes. The chain is Peptidyl-tRNA hydrolase from Chlamydia abortus (strain DSM 27085 / S26/3) (Chlamydophila abortus).